The sequence spans 182 residues: Putative manganese efflux pump MntP (182 aa).

The next 6 helical transmembrane spans lie at 6-26, 37-57, 71-91, 101-121, 131-151, and 162-182; these read LIPLIIMAFALGMDAFSVSLG, ILYIGMTIGIFHIIMPFIGMV, HFAGAILLIGLGFYIVYSTIL, IGISLFVFAFGVSIDSFSVGL, IITILLFGFVSMLLAWIGLLI, and YGEIVGGIILVGFGLYILFPI.

This sequence belongs to the MntP (TC 9.B.29) family.

It is found in the cell membrane. Its function is as follows. Probably functions as a manganese efflux pump. The chain is Putative manganese efflux pump MntP from Bacillus cereus (strain G9842).